The following is a 984-amino-acid chain: Translation initiation factor IF-2 (984 aa).

A disordered region spans residues 32–402 (PAKNATSTLT…TQPQRAAKRK (371 aa)). Low complexity predominate over residues 89–123 (PAETEAQASPAQPEAKAAAPAAEAEEAPAAKPAPA). The span at 126–136 (RKAEARTEAPR) shows a compositional bias: basic and acidic residues. 2 stretches are compositionally biased toward low complexity: residues 154–172 (APET…SAAP) and 187–197 (AETTESAPAEP). The segment covering 198–220 (AAEKAPAEKRRYEVSMEPEKDSV) has biased composition (basic and acidic residues). Over residues 255 to 270 (RPDPAAVQAQAAAAAQ) the composition is skewed to low complexity. Residues 271–283 (AREERAERPDRGP) show a composition bias toward basic and acidic residues. Low complexity predominate over residues 308–334 (GRPAPRSGAPRPGGARPAAGFGQPAQA). In terms of domain architecture, tr-type G spans 482–651 (PRPPVVTIMG…ALQAEVLELK (170 aa)). The interval 491-498 (GHVDHGKT) is G1. 491–498 (GHVDHGKT) contacts GTP. The G2 stretch occupies residues 516–520 (GITQH). The segment at 537–540 (DTPG) is G3. Residues 537–541 (DTPGH) and 591–594 (NKID) contribute to the GTP site. The interval 591 to 594 (NKID) is G4. A G5 region spans residues 627 to 629 (SAK).

This sequence belongs to the TRAFAC class translation factor GTPase superfamily. Classic translation factor GTPase family. IF-2 subfamily.

It is found in the cytoplasm. One of the essential components for the initiation of protein synthesis. Protects formylmethionyl-tRNA from spontaneous hydrolysis and promotes its binding to the 30S ribosomal subunits. Also involved in the hydrolysis of GTP during the formation of the 70S ribosomal complex. This is Translation initiation factor IF-2 from Oleidesulfovibrio alaskensis (strain ATCC BAA-1058 / DSM 17464 / G20) (Desulfovibrio alaskensis).